The primary structure comprises 157 residues: Putative 4-hydroxy-4-methyl-2-oxoglutarate aldolase (157 aa).

Substrate-binding positions include 78-81 (GDVI) and Arg-100. Asp-101 lines the a divalent metal cation pocket.

This sequence belongs to the class II aldolase/RraA-like family. As to quaternary structure, homotrimer. It depends on a divalent metal cation as a cofactor.

The enzyme catalyses 4-hydroxy-4-methyl-2-oxoglutarate = 2 pyruvate. It carries out the reaction oxaloacetate + H(+) = pyruvate + CO2. Catalyzes the aldol cleavage of 4-hydroxy-4-methyl-2-oxoglutarate (HMG) into 2 molecules of pyruvate. Also contains a secondary oxaloacetate (OAA) decarboxylase activity due to the common pyruvate enolate transition state formed following C-C bond cleavage in the retro-aldol and decarboxylation reactions. The polypeptide is Putative 4-hydroxy-4-methyl-2-oxoglutarate aldolase (Mycobacterium leprae (strain Br4923)).